A 153-amino-acid chain; its full sequence is Prefoldin subunit alpha (153 aa).

The segment at 126–153 (KRLEQGYRQAPGGSPVPHRHDHEDHDEE) is disordered. Residues 143–153 (HRHDHEDHDEE) show a composition bias toward basic and acidic residues.

It belongs to the prefoldin alpha subunit family. Heterohexamer of two alpha and four beta subunits.

It localises to the cytoplasm. In terms of biological role, molecular chaperone capable of stabilizing a range of proteins. Seems to fulfill an ATP-independent, HSP70-like function in archaeal de novo protein folding. The sequence is that of Prefoldin subunit alpha from Methanoregula boonei (strain DSM 21154 / JCM 14090 / 6A8).